The chain runs to 2135 residues: Nonribosomal peptide synthetase gliP (2135 aa).

Residues 34-424 (TYTELDVASS…LPADVEEPLR (391 aa)) form an adenylation 1 region. In terms of domain architecture, Carrier 1 spans 519–594 (TEREQVIAEC…GILPYARDLA (76 aa)). At serine 555 the chain carries O-(pantetheine 4'-phosphoryl)serine. The segment at 663-913 (AEHICNAWRQ…MATLPLVCRI (251 aa)) is condensation 1. Residues 1078–1458 (YRELDQKSNA…YQEEPRLTQA (381 aa)) form an adenylation 2 region. Positions 1544–1622 (ASIADGIATL…EQVELVRRKR (79 aa)) constitute a Carrier 2 domain. Residue serine 1582 is modified to O-(pantetheine 4'-phosphoryl)serine. A condensation 2 region spans residues 1642-1905 (SPLERQTWFQ…FLDRLPLRFK (264 aa)). The region spanning 2061 to 2134 (RRLVGILQRE…DLAQRLYRQV (74 aa)) is the Carrier 3 domain. At serine 2095 the chain carries O-(pantetheine 4'-phosphoryl)serine.

Belongs to the NRP synthetase family.

It functions in the pathway mycotoxin biosynthesis. Its function is as follows. Nonribosomal peptide synthetase; part of the gene cluster that mediates the biosynthesis of gliotoxin, a member of the epipolythiodioxopiperazine (ETP) class of toxins characterized by a disulfide-bridged cyclic dipeptide. The first step in gliotoxin biosynthesis is the condensation of serine and phenylalanine to form the cyclo-L-phenylalanyl-L-serine diketopiperazine (DKP) by the NRPS gliP. GliP is also able to produce the DKP cyclo-L-tryptophanyl-L-serine, suggesting that the substrate specificity of the first adenylation (A) domain in gliP is sufficiently relaxed to accommodate both L-Phe and L-Trp. The cytochrome P450 monooxygenase gliC has been shown to catalyze the subsequent hydroxylation of the alpha-carbon of L-Phe in cyclo-L-phenylalanyl-L-serine whereas the second cytochrome P450 enzyme, gliF, is presumably involved in the modification of the DKP side chain. The glutathione S-transferase (GST) gliG then forms a bis-glutathionylated biosynthetic intermediate which is responsible for the sulfurization of gliotoxin. This bis-glutathionylated intermediate is subsequently processed by the gamma-glutamyl cyclotransferase gliK to remove both gamma-glutamyl moieties. Subsequent processing via gliI yields a biosynthetic intermediate, which is N-methylated via the N-methyltransferase gliN, before the gliotoxin oxidoreductase gliT-mediated disulfide bridge closure. GliN-mediated amide methylation confers stability to ETP, damping the spontaneous formation of tri- and tetrasulfides. Intracellular dithiol gliotoxin oxidized by gliT is subsequently effluxed by gliA. Gliotoxin contributes to pathogenesis during invasive aspergillosis. In macrophages and neutrophils, gliotoxin showed inhibition of various different cell functions including cytokine production, antigen presentation, phagocytosis, and production of reactive oxygen species. This chain is Nonribosomal peptide synthetase gliP, found in Aspergillus fumigatus (strain ATCC MYA-4609 / CBS 101355 / FGSC A1100 / Af293) (Neosartorya fumigata).